The following is a 174-amino-acid chain: Imidazole glycerol phosphate synthase subunit HisH (174 aa).

Residues 2 to 174 enclose the Glutamine amidotransferase type-1 domain; the sequence is SVVIINTGCA…AAVNKDNFWR (173 aa). C77 (nucleophile) is an active-site residue.

Heterodimer of HisH and HisF.

It is found in the cytoplasm. The enzyme catalyses 5-[(5-phospho-1-deoxy-D-ribulos-1-ylimino)methylamino]-1-(5-phospho-beta-D-ribosyl)imidazole-4-carboxamide + L-glutamine = D-erythro-1-(imidazol-4-yl)glycerol 3-phosphate + 5-amino-1-(5-phospho-beta-D-ribosyl)imidazole-4-carboxamide + L-glutamate + H(+). It carries out the reaction L-glutamine + H2O = L-glutamate + NH4(+). It functions in the pathway amino-acid biosynthesis; L-histidine biosynthesis; L-histidine from 5-phospho-alpha-D-ribose 1-diphosphate: step 5/9. IGPS catalyzes the conversion of PRFAR and glutamine to IGP, AICAR and glutamate. The HisH subunit catalyzes the hydrolysis of glutamine to glutamate and ammonia as part of the synthesis of IGP and AICAR. The resulting ammonia molecule is channeled to the active site of HisF. This chain is Imidazole glycerol phosphate synthase subunit HisH (hisH), found in Buchnera aphidicola subsp. Schlechtendalia chinensis.